A 282-amino-acid chain; its full sequence is Ribosome biogenesis GTPase A (282 aa).

The CP-type G domain maps to 14 to 178 (RREVTEKLKL…LLDTPGILWP (165 aa)). GTP is bound by residues 58 to 61 (NKAD), 86 to 87 (NS), 130 to 135 (NVGKST), and Gly174.

Belongs to the TRAFAC class YlqF/YawG GTPase family. MTG1 subfamily. As to quaternary structure, interacts with ctc. Interacts with the immature 50S ribosome subunit. 2 molecules of rbgA bind to one 50S subunit.

It is found in the cytoplasm. Its function is as follows. Essential protein that is required for a late step of 50S ribosomal subunit assembly. Has GTPase activity that is stimulated by interaction with the immature 50S ribosome subunit. Binds to the 23S rRNA. Required for the association of ribosomal proteins rplP and rpmA with the large subunit. The sequence is that of Ribosome biogenesis GTPase A (rbgA) from Bacillus spizizenii (strain ATCC 23059 / NRRL B-14472 / W23) (Bacillus subtilis subsp. spizizenii).